The chain runs to 628 residues: Biosynthetic arginine decarboxylase (628 aa).

Lys99 is modified (N6-(pyridoxal phosphate)lysine). Substrate is bound at residue 279–289; the sequence is VDVGGGLGIDY.

This sequence belongs to the Orn/Lys/Arg decarboxylase class-II family. SpeA subfamily. Mg(2+) serves as cofactor. The cofactor is pyridoxal 5'-phosphate.

The enzyme catalyses L-arginine + H(+) = agmatine + CO2. Its pathway is amine and polyamine biosynthesis; agmatine biosynthesis; agmatine from L-arginine: step 1/1. Functionally, catalyzes the biosynthesis of agmatine from arginine. In Xylella fastidiosa (strain M12), this protein is Biosynthetic arginine decarboxylase.